Here is a 149-residue protein sequence, read N- to C-terminus: Cytochrome c-type biogenesis protein CcmE (149 aa).

At 1 to 8 the chain is on the cytoplasmic side; the sequence is MNPKRKQR. The helical; Signal-anchor for type II membrane protein transmembrane segment at 9–29 threads the bilayer; it reads LIIVSFLVIGVSATVGLIMAA. Topologically, residues 30 to 149 are periplasmic; sequence LSSNVNHFYN…AQDAAPAQTY (120 aa). Heme is bound by residues H124 and Y128.

Belongs to the CcmE/CycJ family.

The protein resides in the cell inner membrane. In terms of biological role, heme chaperone required for the biogenesis of c-type cytochromes. Transiently binds heme delivered by CcmC and transfers the heme to apo-cytochromes in a process facilitated by CcmF and CcmH. In Hahella chejuensis (strain KCTC 2396), this protein is Cytochrome c-type biogenesis protein CcmE.